A 343-amino-acid chain; its full sequence is UPF0283 membrane protein blr7254 (343 aa).

3 helical membrane passes run 64-84 (GALF…LGVV), 97-117 (LGFV…VVIG), and 214-234 (IVTA…VAAL).

Belongs to the UPF0283 family.

Its subcellular location is the cell inner membrane. The polypeptide is UPF0283 membrane protein blr7254 (Bradyrhizobium diazoefficiens (strain JCM 10833 / BCRC 13528 / IAM 13628 / NBRC 14792 / USDA 110)).